Reading from the N-terminus, the 314-residue chain is Leucine-rich repeat-containing protein 52 (314 aa).

The signal sequence occupies residues 1-23 (MSLASGPSSKLLLFSLGMGLVSG). One can recognise an LRRNT domain in the interval 24–53 (SKCPNKCVCQDQEVACIDLHLTEYPADIPL). Over 24 to 244 (SKCPNKCVCQ…MCITHLDQQD (221 aa)) the chain is Extracellular. 2 cysteine pairs are disulfide-bonded: Cys-26/Cys-32 and Cys-30/Cys-39. LRR repeat units follow at residues 54 to 73 (NTRRLYLNNNKITSLPALQL), 78 to 99 (DLVYLDCQNNRIREVMDYTFIG), 102 to 123 (RLIYLDLSSNNLTSISPFSFSV), 126 to 148 (NLVRLNISHNPHLLYLDKYVFAN), and 151 to 172 (SLRYLDLRNTGLHIIDHNGFHH). Asn-112, Asn-131, and Asn-148 each carry an N-linked (GlcNAc...) asparagine glycan. The LRRCT domain maps to 184 to 238 (NPWICNCSFLDFTIHLLVSHMDHPDAQNATCTEPAELKGWPITKVGNPLQYMCIT). 2 cysteine pairs are disulfide-bonded: Cys-188–Cys-214 and Cys-190–Cys-236. 2 N-linked (GlcNAc...) asparagine glycosylation sites follow: Asn-189 and Asn-211. Residues 245–265 (YIFLLLIGFCIFAAGTVAAWL) form a helical membrane-spanning segment. The Cytoplasmic segment spans residues 266-314 (TGVCAVLYQNALRTSSGDDTEDETGSRFANQIFRSNTHLGPIRRFPELI).

Interacts with KCNMA1. Interacts with KCNU1; this interaction may be required for LRRC52 stability and changes the channel gating properties. In terms of processing, N-glycosylated. As to expression, testis-specific (at protein level). At the mRNA level, also detected in kidney, ventricle, spinal cord and skeletal muscle, although at lower levels compared to testis. Expression in testis at the protein level requires the presence of KCNU1.

Its subcellular location is the cell membrane. Functionally, auxiliary protein of the large-conductance, voltage and calcium-activated potassium channel (BK alpha). Modulates gating properties by producing a marked shift in the BK channel's voltage dependence of activation in the hyperpolarizing direction, and in the absence of calcium. KCNU1 channel auxiliary protein. Modulates KCNU1 gating properties, shifting KCNU1 gating to more negative potentials at a given pH. The chain is Leucine-rich repeat-containing protein 52 (Lrrc52) from Mus musculus (Mouse).